A 245-amino-acid chain; its full sequence is Orotidine 5'-phosphate decarboxylase (245 aa).

Residues aspartate 22, lysine 44, 71–80, threonine 131, arginine 192, glutamine 201, glycine 221, and arginine 222 each bind substrate; that span reads DLKFHDIPNT. Lysine 73 (proton donor) is an active-site residue.

Belongs to the OMP decarboxylase family. Type 1 subfamily. Homodimer.

The catalysed reaction is orotidine 5'-phosphate + H(+) = UMP + CO2. It functions in the pathway pyrimidine metabolism; UMP biosynthesis via de novo pathway; UMP from orotate: step 2/2. Functionally, catalyzes the decarboxylation of orotidine 5'-monophosphate (OMP) to uridine 5'-monophosphate (UMP). The chain is Orotidine 5'-phosphate decarboxylase from Salmonella typhimurium (strain LT2 / SGSC1412 / ATCC 700720).